The following is a 362-amino-acid chain: NAD(P)H-quinone oxidoreductase subunit 1, chloroplastic (362 aa).

Transmembrane regions (helical) follow at residues 29–49 (ILPILTLLLGITIEVLVIVWL), 103–123 (IAVISVLLSFLVIPLGYHFVL), 128–148 (IGVFLWIAISSIAPIGLLMAG), 164–184 (AAQSISYEIPLTFCVLAISLL), 202–222 (FFGWNIWRQPIGFLVFLISSL), 247–267 (YSGIKYGLFYLVSYLNLLVSS), 303–323 (TMGIFITLTKAYLFLFISITI), and 335–355 (LLNLGWKFLLPISLGNLLLTT).

Belongs to the complex I subunit 1 family. As to quaternary structure, NDH is composed of at least 16 different subunits, 5 of which are encoded in the nucleus.

It localises to the plastid. Its subcellular location is the chloroplast thylakoid membrane. The enzyme catalyses a plastoquinone + NADH + (n+1) H(+)(in) = a plastoquinol + NAD(+) + n H(+)(out). The catalysed reaction is a plastoquinone + NADPH + (n+1) H(+)(in) = a plastoquinol + NADP(+) + n H(+)(out). Functionally, NDH shuttles electrons from NAD(P)H:plastoquinone, via FMN and iron-sulfur (Fe-S) centers, to quinones in the photosynthetic chain and possibly in a chloroplast respiratory chain. The immediate electron acceptor for the enzyme in this species is believed to be plastoquinone. Couples the redox reaction to proton translocation, and thus conserves the redox energy in a proton gradient. The sequence is that of NAD(P)H-quinone oxidoreductase subunit 1, chloroplastic from Triticum aestivum (Wheat).